The sequence spans 247 residues: PF03932 family protein CutC (247 aa).

This sequence belongs to the CutC family.

It is found in the cytoplasm. This is PF03932 family protein CutC from Vibrio campbellii (strain ATCC BAA-1116).